Reading from the N-terminus, the 208-residue chain is Small ribosomal subunit protein uS4 (208 aa).

An S4 RNA-binding domain is found at 98 to 158; sequence GRLDNVVYRM…EKSKKQARIK (61 aa).

Belongs to the universal ribosomal protein uS4 family. In terms of assembly, part of the 30S ribosomal subunit. Contacts protein S5. The interaction surface between S4 and S5 is involved in control of translational fidelity.

In terms of biological role, one of the primary rRNA binding proteins, it binds directly to 16S rRNA where it nucleates assembly of the body of the 30S subunit. With S5 and S12 plays an important role in translational accuracy. In Actinobacillus pleuropneumoniae serotype 5b (strain L20), this protein is Small ribosomal subunit protein uS4.